Consider the following 747-residue polypeptide: DNA ligase 1 (747 aa).

The segment at 1–84 (MQKSITSFFK…KEVDDKTTDK (84 aa)) is disordered. 7 positions are modified to phosphoserine: S18, S20, S42, S44, S46, S60, and S65. The segment covering 26–42 (PKIDAKTELPDEPHIKS) has biased composition (basic and acidic residues). Basic and acidic residues predominate over residues 60 to 84 (SEEKTSPVKNVKKEPKEVDDKTTDK). K395 serves as the catalytic N6-AMP-lysine intermediate. The segment covering 725 to 740 (QSQDQVKNNQKSSTQM) has biased composition (polar residues). The tract at residues 725-747 (QSQDQVKNNQKSSTQMEMEDEFY) is disordered.

This sequence belongs to the ATP-dependent DNA ligase family.

Its subcellular location is the nucleus. The enzyme catalyses ATP + (deoxyribonucleotide)n-3'-hydroxyl + 5'-phospho-(deoxyribonucleotide)m = (deoxyribonucleotide)n+m + AMP + diphosphate.. In terms of biological role, DNA ligase that seals nicks in double-stranded DNA during DNA replication, DNA recombination and DNA repair. In Drosophila melanogaster (Fruit fly), this protein is DNA ligase 1.